Reading from the N-terminus, the 605-residue chain is Elongation factor 4 (605 aa).

The region spanning Asn-9–Ala-192 is the tr-type G domain. GTP contacts are provided by residues Asp-21 to Thr-26 and Asn-139 to Asp-142.

It belongs to the TRAFAC class translation factor GTPase superfamily. Classic translation factor GTPase family. LepA subfamily.

It is found in the cell inner membrane. The enzyme catalyses GTP + H2O = GDP + phosphate + H(+). Functionally, required for accurate and efficient protein synthesis under certain stress conditions. May act as a fidelity factor of the translation reaction, by catalyzing a one-codon backward translocation of tRNAs on improperly translocated ribosomes. Back-translocation proceeds from a post-translocation (POST) complex to a pre-translocation (PRE) complex, thus giving elongation factor G a second chance to translocate the tRNAs correctly. Binds to ribosomes in a GTP-dependent manner. The sequence is that of Elongation factor 4 from Pelodictyon phaeoclathratiforme (strain DSM 5477 / BU-1).